The following is a 236-amino-acid chain: Phosphoribosylaminoimidazole-succinocarboxamide synthase (236 aa).

This sequence belongs to the SAICAR synthetase family.

It carries out the reaction 5-amino-1-(5-phospho-D-ribosyl)imidazole-4-carboxylate + L-aspartate + ATP = (2S)-2-[5-amino-1-(5-phospho-beta-D-ribosyl)imidazole-4-carboxamido]succinate + ADP + phosphate + 2 H(+). It functions in the pathway purine metabolism; IMP biosynthesis via de novo pathway; 5-amino-1-(5-phospho-D-ribosyl)imidazole-4-carboxamide from 5-amino-1-(5-phospho-D-ribosyl)imidazole-4-carboxylate: step 1/2. The sequence is that of Phosphoribosylaminoimidazole-succinocarboxamide synthase from Pseudomonas aeruginosa (strain LESB58).